A 55-amino-acid polypeptide reads, in one-letter code: Large ribosomal subunit protein bL33 (55 aa).

The protein belongs to the bacterial ribosomal protein bL33 family.

This is Large ribosomal subunit protein bL33 from Sinorhizobium medicae (strain WSM419) (Ensifer medicae).